The following is a 153-amino-acid chain: Histone H2A (153 aa).

2 disordered regions span residues 1-27 (MDTGAKLKKGAGERKGGGPKKKPVSRS) and 131-153 (KAAAAATKEPKSPAKATKSPKKA). The segment covering 132-147 (AAAAATKEPKSPAKAT) has biased composition (low complexity). Residues 149–152 (SPKK) carry the SPKK motif motif.

It belongs to the histone H2A family. In terms of assembly, the nucleosome is a histone octamer containing two molecules each of H2A, H2B, H3 and H4 assembled in one H3-H4 heterotetramer and two H2A-H2B heterodimers. The octamer wraps approximately 147 bp of DNA.

The protein resides in the nucleus. It is found in the chromosome. Core component of nucleosome. Nucleosomes wrap and compact DNA into chromatin, limiting DNA accessibility to the cellular machineries which require DNA as a template. Histones thereby play a central role in transcription regulation, DNA repair, DNA replication and chromosomal stability. DNA accessibility is regulated via a complex set of post-translational modifications of histones, also called histone code, and nucleosome remodeling. This is Histone H2A from Euphorbia esula (Leafy spurge).